The primary structure comprises 232 residues: Lipoprotein-releasing system ATP-binding protein LolD (232 aa).

In terms of domain architecture, ABC transporter spans 6 to 231 (ISCENLNKVY…KLTIKESQHV (226 aa)). Residue 42–49 (GSSGSGKS) participates in ATP binding.

Belongs to the ABC transporter superfamily. Lipoprotein translocase (TC 3.A.1.125) family. As to quaternary structure, the complex is composed of two ATP-binding proteins (LolD) and two transmembrane proteins (LolC and LolE).

It is found in the cell inner membrane. Functionally, part of the ABC transporter complex LolCDE involved in the translocation of mature outer membrane-directed lipoproteins, from the inner membrane to the periplasmic chaperone, LolA. Responsible for the formation of the LolA-lipoprotein complex in an ATP-dependent manner. The polypeptide is Lipoprotein-releasing system ATP-binding protein LolD (Pseudoalteromonas translucida (strain TAC 125)).